The following is a 432-amino-acid chain: Adenylosuccinate synthetase (432 aa).

GTP is bound by residues 13–19 and 41–43; these read GDEGKGK and GHT. Aspartate 14 (proton acceptor) is an active-site residue. 2 residues coordinate Mg(2+): aspartate 14 and glycine 41. Residues 14–17, 39–42, threonine 130, arginine 144, glutamine 225, threonine 240, and arginine 304 each bind IMP; these read DEGK and NAGH. The active-site Proton donor is histidine 42. 300–306 lines the substrate pocket; that stretch reads ATTGRSR. Residues arginine 306, 332 to 334, and 415 to 417 each bind GTP; these read KLD and STG.

It belongs to the adenylosuccinate synthetase family. Homodimer. It depends on Mg(2+) as a cofactor.

It is found in the cytoplasm. The enzyme catalyses IMP + L-aspartate + GTP = N(6)-(1,2-dicarboxyethyl)-AMP + GDP + phosphate + 2 H(+). It functions in the pathway purine metabolism; AMP biosynthesis via de novo pathway; AMP from IMP: step 1/2. Its function is as follows. Plays an important role in the de novo pathway of purine nucleotide biosynthesis. Catalyzes the first committed step in the biosynthesis of AMP from IMP. In Yersinia pestis bv. Antiqua (strain Antiqua), this protein is Adenylosuccinate synthetase.